The following is a 311-amino-acid chain: ATP synthase gamma chain (311 aa).

A disulfide bridge connects residues Cys-67 and Cys-138.

Belongs to the ATPase gamma chain family. F-type ATPases have 2 components, CF(1) - the catalytic core - and CF(0) - the membrane proton channel. CF(1) has five subunits: alpha(3), beta(3), gamma(1), delta(1), epsilon(1). CF(0) has three main subunits: a, b and c.

The protein localises to the cellular thylakoid membrane. Its activity is regulated as follows. Thiol-modulation by raising the activation threshold of the enzyme upon oxidation of the cysteines, thereby preventing wasteful ATP-hydrolysis. Its function is as follows. Produces ATP from ADP in the presence of a proton gradient across the membrane. The gamma chain is believed to be important in regulating ATPase activity and the flow of protons through the CF(0) complex. The protein is ATP synthase gamma chain (atpG) of Arthrospira platensis (Spirulina platensis).